The chain runs to 446 residues: Divalent metal cation transporter MntH (446 aa).

A run of 11 helical transmembrane segments spans residues 32 to 52 (FSFL…GNWI), 59 to 79 (AQFG…AMLL), 107 to 127 (AFVF…AEVI), 139 to 159 (IPLL…LFIM), 168 to 188 (AIVG…VFIA), 210 to 230 (GALF…NLYL), 264 to 284 (SIAF…FFGV), 303 to 323 (PLLG…ALLA), 355 to 375 (LITR…FNSN), 381 to 401 (QLLV…LIPL), and 420 to 440 (VNII…YLII).

The protein belongs to the NRAMP family.

Its subcellular location is the cell membrane. Functionally, h(+)-stimulated, divalent metal cation uptake system. The polypeptide is Divalent metal cation transporter MntH (Staphylococcus saprophyticus subsp. saprophyticus (strain ATCC 15305 / DSM 20229 / NCIMB 8711 / NCTC 7292 / S-41)).